Reading from the N-terminus, the 266-residue chain is Type III pantothenate kinase (266 aa).

Glu-15 to Ser-22 contributes to the ATP binding site. Substrate contacts are provided by residues Tyr-105 and Gly-112–Arg-115. Catalysis depends on Asp-114, which acts as the Proton acceptor. Asp-135 contacts K(+). Residue Thr-138 coordinates ATP. Residue Thr-191 coordinates substrate.

The protein belongs to the type III pantothenate kinase family. As to quaternary structure, homodimer. The cofactor is NH4(+). Requires K(+) as cofactor.

Its subcellular location is the cytoplasm. It carries out the reaction (R)-pantothenate + ATP = (R)-4'-phosphopantothenate + ADP + H(+). It participates in cofactor biosynthesis; coenzyme A biosynthesis; CoA from (R)-pantothenate: step 1/5. Catalyzes the phosphorylation of pantothenate (Pan), the first step in CoA biosynthesis. This is Type III pantothenate kinase from Chlorobium chlorochromatii (strain CaD3).